Reading from the N-terminus, the 185-residue chain is Ribosome-recycling factor (185 aa).

Belongs to the RRF family.

It localises to the cytoplasm. Responsible for the release of ribosomes from messenger RNA at the termination of protein biosynthesis. May increase the efficiency of translation by recycling ribosomes from one round of translation to another. In Corynebacterium jeikeium (strain K411), this protein is Ribosome-recycling factor.